Consider the following 214-residue polypeptide: Adenylate kinase (214 aa).

10–15 (GAGKGT) is a binding site for ATP. An NMP region spans residues 30-59 (STGDMLRAAVKAGTPLGLEAKKVMDAGQLV). AMP is bound by residues Thr-31, Arg-36, 57-59 (QLV), 85-88 (GFPR), and Gln-92. Residues 122-159 (GRRVHPGSGRVYHIVFNQPKVEGKDDVTGEDLAIRPDD) form an LID region. ATP is bound by residues Arg-123 and 132 to 133 (VY). 2 residues coordinate AMP: Arg-156 and Arg-167. Gln-200 lines the ATP pocket.

This sequence belongs to the adenylate kinase family. As to quaternary structure, monomer.

The protein resides in the cytoplasm. The catalysed reaction is AMP + ATP = 2 ADP. Its pathway is purine metabolism; AMP biosynthesis via salvage pathway; AMP from ADP: step 1/1. Functionally, catalyzes the reversible transfer of the terminal phosphate group between ATP and AMP. Plays an important role in cellular energy homeostasis and in adenine nucleotide metabolism. The chain is Adenylate kinase from Shewanella piezotolerans (strain WP3 / JCM 13877).